The sequence spans 325 residues: Tetraacyldisaccharide 4'-kinase (325 aa).

55 to 62 (TAGGNGKT) provides a ligand contact to ATP.

It belongs to the LpxK family.

The catalysed reaction is a lipid A disaccharide + ATP = a lipid IVA + ADP + H(+). It participates in glycolipid biosynthesis; lipid IV(A) biosynthesis; lipid IV(A) from (3R)-3-hydroxytetradecanoyl-[acyl-carrier-protein] and UDP-N-acetyl-alpha-D-glucosamine: step 6/6. Its function is as follows. Transfers the gamma-phosphate of ATP to the 4'-position of a tetraacyldisaccharide 1-phosphate intermediate (termed DS-1-P) to form tetraacyldisaccharide 1,4'-bis-phosphate (lipid IVA). This is Tetraacyldisaccharide 4'-kinase from Citrobacter koseri (strain ATCC BAA-895 / CDC 4225-83 / SGSC4696).